The sequence spans 391 residues: Metal tolerance protein 7 (391 aa).

The segment at 1–21 (MGSRGRRGGGERETETEEDET) is disordered. The Cytoplasmic segment spans residues 1 to 103 (MGSRGRRGGG…LRQMAKGERL (103 aa)). Residues 104 to 124 (AINLSNIINLILFIGKVLASV) form a helical membrane-spanning segment. Topologically, residues 125–134 (ESLSMAVIAS) are vacuolar. Residues 135-155 (TLDSLLDLLSGFILWFTAHAM) traverse the membrane as a helical segment. Over 156 to 171 (KKPNKYSYPIGKRRMQ) the chain is Cytoplasmic. The chain crosses the membrane as a helical span at residues 172 to 192 (PVGIIVFASVMGTLGFQVLIE). The Vacuolar segment spans residues 193-210 (SGRQLITNEHQVFDHRKE). The chain crosses the membrane as a helical span at residues 211-231 (LWMIGSMSSVAVVKFFLMLYC). The Cytoplasmic portion of the chain corresponds to 232–246 (RSFKNEIVRAYAQDH). The chain crosses the membrane as a helical span at residues 247–264 (FFDVITNSVGLVSALLAV). Residues 265–266 (RY) lie on the Vacuolar side of the membrane. Residues 267–287 (KWWMDPVGAILIAVYTITTWA) traverse the membrane as a helical segment. Over 288–391 (RTVVENVGTL…THRPEHKAEV (104 aa)) the chain is Cytoplasmic.

The protein belongs to the cation diffusion facilitator (CDF) transporter (TC 2.A.4) family. SLC30A subfamily.

The protein resides in the vacuole membrane. Its function is as follows. Involved in sequestration of excess metal in the cytoplasm into vacuoles to maintain metal homeostasis. This is Metal tolerance protein 7 (MTP7) from Oryza sativa subsp. japonica (Rice).